The primary structure comprises 106 residues: uncharacterized protein (106 aa).

Disordered stretches follow at residues 33–64 and 87–106; these read FKTSTRSTGKKRSKGSTSQDGKKQESLESRND and NLTGLESGGSSPPFSLAVSK. Residues 52–63 are compositionally biased toward basic and acidic residues; sequence DGKKQESLESRN. Over residues 87 to 99 the composition is skewed to polar residues; it reads NLTGLESGGSSPP.

It localises to the mitochondrion. This is an uncharacterized protein from Arabidopsis thaliana (Mouse-ear cress).